The chain runs to 219 residues: 7-cyano-7-deazaguanine synthase (219 aa).

An ATP-binding site is contributed by 10–20 (FSGGQDSTTCL). Zn(2+)-binding residues include Cys188, Cys196, Cys199, and Cys202.

This sequence belongs to the QueC family. The cofactor is Zn(2+).

The catalysed reaction is 7-carboxy-7-deazaguanine + NH4(+) + ATP = 7-cyano-7-deazaguanine + ADP + phosphate + H2O + H(+). It functions in the pathway purine metabolism; 7-cyano-7-deazaguanine biosynthesis. Functionally, catalyzes the ATP-dependent conversion of 7-carboxy-7-deazaguanine (CDG) to 7-cyano-7-deazaguanine (preQ(0)). The chain is 7-cyano-7-deazaguanine synthase from Neisseria meningitidis serogroup A / serotype 4A (strain DSM 15465 / Z2491).